A 160-amino-acid chain; its full sequence is Serine-protein kinase RsbW (160 aa).

This sequence belongs to the anti-sigma-factor family.

The catalysed reaction is L-seryl-[protein] + ATP = O-phospho-L-seryl-[protein] + ADP + H(+). It catalyses the reaction L-threonyl-[protein] + ATP = O-phospho-L-threonyl-[protein] + ADP + H(+). Its function is as follows. Negative regulator of sigma-B activity. Phosphorylates and inactivates its specific antagonist protein, RsbV. Upon phosphorylation of RsbV, RsbW is released and binds to sigma-B, thereby blocking its ability to form an RNA polymerase holoenzyme (E-sigma-B). This chain is Serine-protein kinase RsbW, found in Bacillus cereus (strain B4264).